Reading from the N-terminus, the 346-residue chain is MTAGRGDEDSLAAGGPARHIPVLRDEILELAAPQADGLYLDATFGAGGYSRGLLATQGARVLAIDRDPGAIAAGAGLIAESNGRLTLVEARFSDLAAVAERLGLGAFDAALFDIGVSSMQLDEAARGFSFRFDGPLDMRMQQSGPSAADIVNDADEEALADILYYFGEERASRRIAKAIVMDRAKAPFRSTAALAAMIARVCPGKPGDIHPATRSFQALRIAVNDELGELVAGLAGAEARLKPGGRLAVVTFHSLEDRIVKLFFAGRSGRGEAPSRRLPGEPIPPPPTFAVSGRQPVTPSAAEIAANPRARSAKLRHGVRTSAPARAPGRDLMALAALPQRAAKGR.

Residues 47-49, Asp65, Phe92, Asp113, and Gln120 contribute to the S-adenosyl-L-methionine site; that span reads GGY. Positions 270 to 279 are enriched in basic and acidic residues; it reads RGEAPSRRLP. Residues 270–346 are disordered; the sequence is RGEAPSRRLP…ALPQRAAKGR (77 aa).

The protein belongs to the methyltransferase superfamily. RsmH family.

Its subcellular location is the cytoplasm. It catalyses the reaction cytidine(1402) in 16S rRNA + S-adenosyl-L-methionine = N(4)-methylcytidine(1402) in 16S rRNA + S-adenosyl-L-homocysteine + H(+). Specifically methylates the N4 position of cytidine in position 1402 (C1402) of 16S rRNA. In Methylocella silvestris (strain DSM 15510 / CIP 108128 / LMG 27833 / NCIMB 13906 / BL2), this protein is Ribosomal RNA small subunit methyltransferase H.